We begin with the raw amino-acid sequence, 345 residues long: Acyl-CoA--sterol O-acyltransferase 1 (345 aa).

Transmembrane regions (helical) follow at residues 1–21, 32–52, 54–74, 86–106, 120–140, 148–168, 231–251, 258–278, and 291–311; these read MASF…TFFI, LILF…IYSL, LLGI…LLFA, PLSL…QLSP, GPLI…AYEY, VVLT…LAAT, ILAA…IFFY, DWKM…EIAI, and AISQ…LFLP.

This sequence belongs to the wax synthase family.

Its subcellular location is the membrane. Involved in the esterification of cycloartenol. Not implicated in the formation of sterol esters in flowers or during seed maturation. Has a substrate preference toward saturated fatty acyl donors (16:0 &gt; 18:0 &gt; 16:1 &gt; 18:1). Does not require triacyglycerols (TAGs) as a fatty acyl donor, and is unable to acylate diacylglycerol to produce TAG. The chain is Acyl-CoA--sterol O-acyltransferase 1 (ASAT1) from Arabidopsis thaliana (Mouse-ear cress).